Consider the following 120-residue polypeptide: NAD(P)H-quinone oxidoreductase subunit 3, chloroplastic (120 aa).

The next 3 helical transmembrane spans lie at 9–29, 64–84, and 88–108; these read IFWA…LISG, MFAL…PWAM, and VLGV…IVGS.

This sequence belongs to the complex I subunit 3 family. In terms of assembly, NDH is composed of at least 16 different subunits, 5 of which are encoded in the nucleus.

Its subcellular location is the plastid. The protein localises to the chloroplast thylakoid membrane. The catalysed reaction is a plastoquinone + NADH + (n+1) H(+)(in) = a plastoquinol + NAD(+) + n H(+)(out). It carries out the reaction a plastoquinone + NADPH + (n+1) H(+)(in) = a plastoquinol + NADP(+) + n H(+)(out). NDH shuttles electrons from NAD(P)H:plastoquinone, via FMN and iron-sulfur (Fe-S) centers, to quinones in the photosynthetic chain and possibly in a chloroplast respiratory chain. The immediate electron acceptor for the enzyme in this species is believed to be plastoquinone. Couples the redox reaction to proton translocation, and thus conserves the redox energy in a proton gradient. In Illicium oligandrum (Star anise), this protein is NAD(P)H-quinone oxidoreductase subunit 3, chloroplastic.